The chain runs to 227 residues: Ubiquitin domain-containing protein 1 (227 aa).

The disordered stretch occupies residues 1-36 (MGNCVGRQRRERPTAPGHPRKRAGRNEPLKKERLKW). Positions 24-36 (GRNEPLKKERLKW) are enriched in basic and acidic residues. One can recognise a Ubiquitin-like domain in the interval 149–224 (FPLKVRLSTG…IQVIINQPPP (76 aa)).

Interacts with UBTD1.

Its function is as follows. May be involved in the regulation of cellular senescence through a positive feedback loop with TP53. Is a TP53 downstream target gene that increases the stability of TP53 protein by promoting the ubiquitination and degradation of MDM2. The polypeptide is Ubiquitin domain-containing protein 1 (UBTD1) (Bos taurus (Bovine)).